A 477-amino-acid polypeptide reads, in one-letter code: Ectonucleotide pyrophosphatase/phosphodiesterase family member 5 (477 aa).

Positions 1 to 24 (MTSKFLLVSFILAALSLSTTFSLQ) are cleaved as a signal peptide. Zn(2+)-binding residues include Asp-36 and Thr-72. Residue Thr-72 is the Nucleophile of the active site. Asn-101 and Asn-158 each carry an N-linked (GlcNAc...) asparagine glycan. Residues Asp-191, His-195, Asp-238, and His-239 each contribute to the Zn(2+) site. 2 N-linked (GlcNAc...) asparagine glycosylation sites follow: Asn-292 and Asn-329. His-339 provides a ligand contact to Zn(2+). N-linked (GlcNAc...) asparagine glycosylation is found at Asn-362, Asn-369, Asn-382, and Asn-389. Residues 432 to 452 (PYFIGVSLGSIIVIVFFVIFI) traverse the membrane as a helical segment.

This sequence belongs to the nucleotide pyrophosphatase/phosphodiesterase family. Requires Zn(2+) as cofactor. N-glycosylated.

The protein localises to the secreted. Its subcellular location is the membrane. Functionally, can hydrolyze NAD but cannot hydrolyze nucleotide di- and triphosphates. Lacks lysopholipase D activity. May play a role in neuronal cell communication. The polypeptide is Ectonucleotide pyrophosphatase/phosphodiesterase family member 5 (Homo sapiens (Human)).